Here is a 344-residue protein sequence, read N- to C-terminus: MALTIDRDEIIGTLKREIQEITDMQEFQNLKSKYLGKKGLIKSLMNSLKDIDDVELKKEYGKSVNELKEELETLFDEKLSELKEKEREEKEKKNWVDITIPGARRKIGKENLITKTRKEIEEIFIGMGFSVAEGPEIENSWYNFDALNTPEWHPAREMQDTFYLSLDKEKLLRTHTSPVQVRTMLKSKPPLAIISPGRVYRKDELDATHSPVFHQVEGLYVDRNVSVSHLKMYLEVFAQKFFGNKVSVLLRPSYFPFTEPSFEVDISCIFCGGKGCNVCKNTGWIEILGAGLVHPNVFQSVNYDPKVWQGFAFGMGIERVAMLKYNIPDMRELYKNDIRFIENS.

Glu259 contributes to the Mg(2+) binding site.

It belongs to the class-II aminoacyl-tRNA synthetase family. Phe-tRNA synthetase alpha subunit type 1 subfamily. In terms of assembly, tetramer of two alpha and two beta subunits. Mg(2+) is required as a cofactor.

It is found in the cytoplasm. It catalyses the reaction tRNA(Phe) + L-phenylalanine + ATP = L-phenylalanyl-tRNA(Phe) + AMP + diphosphate + H(+). This chain is Phenylalanine--tRNA ligase alpha subunit, found in Petrotoga mobilis (strain DSM 10674 / SJ95).